The chain runs to 349 residues: Nicotinate-nucleotide--dimethylbenzimidazole phosphoribosyltransferase (349 aa).

Glutamate 313 serves as the catalytic Proton acceptor.

This sequence belongs to the CobT family.

It carries out the reaction 5,6-dimethylbenzimidazole + nicotinate beta-D-ribonucleotide = alpha-ribazole 5'-phosphate + nicotinate + H(+). It functions in the pathway nucleoside biosynthesis; alpha-ribazole biosynthesis; alpha-ribazole from 5,6-dimethylbenzimidazole: step 1/2. Functionally, catalyzes the synthesis of alpha-ribazole-5'-phosphate from nicotinate mononucleotide (NAMN) and 5,6-dimethylbenzimidazole (DMB). The polypeptide is Nicotinate-nucleotide--dimethylbenzimidazole phosphoribosyltransferase (Mycobacterium avium (strain 104)).